The chain runs to 197 residues: Phosphoheptose isomerase (197 aa).

The 162-residue stretch at 36–197 folds into the SIS domain; sequence LFAALANNGR…IDALLLGDTE (162 aa). Position 51–53 (51–53) interacts with substrate; sequence NGG. 2 residues coordinate Zn(2+): histidine 60 and glutamate 64. Substrate is bound by residues glutamate 64, 93–94, 119–121, serine 124, and glutamine 174; these read ND and STS. Residues glutamine 174 and histidine 182 each contribute to the Zn(2+) site.

This sequence belongs to the SIS family. GmhA subfamily. Homotetramer. It depends on Zn(2+) as a cofactor.

The protein localises to the cytoplasm. It carries out the reaction 2 D-sedoheptulose 7-phosphate = D-glycero-alpha-D-manno-heptose 7-phosphate + D-glycero-beta-D-manno-heptose 7-phosphate. The protein operates within carbohydrate biosynthesis; D-glycero-D-manno-heptose 7-phosphate biosynthesis; D-glycero-alpha-D-manno-heptose 7-phosphate and D-glycero-beta-D-manno-heptose 7-phosphate from sedoheptulose 7-phosphate: step 1/1. Its function is as follows. Catalyzes the isomerization of sedoheptulose 7-phosphate in D-glycero-D-manno-heptose 7-phosphate. The chain is Phosphoheptose isomerase from Bordetella avium (strain 197N).